We begin with the raw amino-acid sequence, 601 residues long: Replication protein A 70 kDa DNA-binding subunit (601 aa).

The interval 107-172 (MPGKIGDPTP…NTPGGSSKVV (66 aa)) is disordered. The span at 124-135 (APSTAPAPTARP) shows a compositional bias: low complexity. The segment covering 137 to 153 (QPQNGSDGSTYRPSAQS) has biased composition (polar residues). The OB DNA-binding region spans 184–268 (WTIRARVTNK…LKNDYEMTLN (85 aa)). Ser370 bears the Phosphoserine mark. A C4-type zinc finger spans residues 466-488 (CPSKDCNKKVVDQQNGMFRCEKC).

This sequence belongs to the replication factor A protein 1 family. As to quaternary structure, component of the heterotrimeric canonical replication protein A complex (RPA).

It localises to the nucleus. It is found in the PML body. Its function is as follows. As part of the heterotrimeric replication protein A complex (RPA/RP-A), binds and stabilizes single-stranded DNA intermediates, that form during DNA replication or upon DNA stress. It prevents their reannealing and in parallel, recruits and activates different proteins and complexes involved in DNA metabolism. Thereby, it plays an essential role both in DNA replication and the cellular response to DNA damage. The sequence is that of Replication protein A 70 kDa DNA-binding subunit (rpa1) from Danio rerio (Zebrafish).